A 103-amino-acid polypeptide reads, in one-letter code: Histone H4.2 (103 aa).

Positions 1-14 are enriched in gly residues; that stretch reads MSGRGKGGKGLGKG. Residues 1–20 are disordered; sequence MSGRGKGGKGLGKGGAKRHR. K6 is modified (N6-acetyl-N6-methyllysine; alternate). An N6-methyllysine; alternate mark is found at K6, K9, and K13. N6-acetyl-N6-methyllysine; alternate is present on K13. A DNA-binding region spans residues 17–21; it reads KRHRK. K92 carries the post-translational modification N6-glutaryllysine.

Belongs to the histone H4 family. The nucleosome is a histone octamer containing two molecules each of H2A, H2B, H3 and H4 assembled in one H3-H4 heterotetramer and two H2A-H2B heterodimers. The octamer wraps approximately 147 bp of DNA. In terms of processing, glutarylation at Lys-92 (H4K91glu) destabilizes nucleosomes by promoting dissociation of the H2A-H2B dimers from nucleosomes.

The protein localises to the nucleus. Its subcellular location is the chromosome. Functionally, core component of nucleosome. Nucleosomes wrap and compact DNA into chromatin, limiting DNA accessibility to the cellular machineries which require DNA as a template. Histones thereby play a central role in transcription regulation, DNA repair, DNA replication and chromosomal stability. DNA accessibility is regulated via a complex set of post-translational modifications of histones, also called histone code, and nucleosome remodeling. This is Histone H4.2 (hhfB) from Emericella nidulans (strain FGSC A4 / ATCC 38163 / CBS 112.46 / NRRL 194 / M139) (Aspergillus nidulans).